The following is a 218-amino-acid chain: Small ribosomal subunit protein uS3c (218 aa).

In terms of domain architecture, KH type-2 spans 47-118 (VQKEMRISSG…RLNVVITRVA (72 aa)).

This sequence belongs to the universal ribosomal protein uS3 family. As to quaternary structure, part of the 30S ribosomal subunit.

It localises to the plastid. The protein resides in the chloroplast. The protein is Small ribosomal subunit protein uS3c (rps3) of Ceratophyllum demersum (Rigid hornwort).